The following is an 81-amino-acid chain: GAMMA-ctenitoxin-Pn1a (81 aa).

The N-terminal stretch at 1–16 is a signal peptide; it reads MKVAIVFLSLLVLAFA. Positions 17-34 are excised as a propeptide; that stretch reads SESIEENREEFPVEESAR. 5 cysteine pairs are disulfide-bonded: Cys35-Cys49, Cys42-Cys55, Cys46-Cys81, Cys48-Cys65, and Cys57-Cys63.

Belongs to the neurotoxin 03 (Tx2) family. 05 subfamily. In terms of tissue distribution, expressed by the venom gland.

It localises to the secreted. In terms of biological role, this insecticidal neurotoxin targets two types of channels/receptors. It reversibly inhibits the N-methyl-D-aspartate (NMDA)-subtype of ionotropic glutamate receptor (GRIN). It inhibits glutamate uptake from rat brain synaptosomes, and blocks GRIN in hippocampal slices. It also acts on sodium channels of both insects and mammals. On sodium channel insects, it strongly slows down channel inactivation (EC(50)=212.5 nM) and causes an increase (105%) in peak amplitude (at 1 uM) of B.germanica sodium channel (Nav), whereas it inhibits all mammalien sodium channels tested with the following order of potency: Nav1.3/SCN3A (IC(50)=1.5 uM) &gt; Nav1.6/SCN8A &gt; Nav1.5/SCN5A &gt; Nav1.4/SCN4A &gt;= Nav1.2/SCN2A. In vivo, it is highly toxic to house fly (Musca domestica), cockroach (Periplaneta americana), and cricket (Acheta domesticus). In different rat pain models (induced by PGE2, carrageenan or glutamate), it shows antinociceptive effect that may be related to an inhibitory activity on the glutamatergic system. The sequence is that of GAMMA-ctenitoxin-Pn1a from Phoneutria nigriventer (Brazilian armed spider).